A 573-amino-acid chain; its full sequence is Proline--tRNA ligase (573 aa).

This sequence belongs to the class-II aminoacyl-tRNA synthetase family. ProS type 1 subfamily. In terms of assembly, homodimer.

The protein localises to the cytoplasm. It catalyses the reaction tRNA(Pro) + L-proline + ATP = L-prolyl-tRNA(Pro) + AMP + diphosphate. Functionally, catalyzes the attachment of proline to tRNA(Pro) in a two-step reaction: proline is first activated by ATP to form Pro-AMP and then transferred to the acceptor end of tRNA(Pro). As ProRS can inadvertently accommodate and process non-cognate amino acids such as alanine and cysteine, to avoid such errors it has two additional distinct editing activities against alanine. One activity is designated as 'pretransfer' editing and involves the tRNA(Pro)-independent hydrolysis of activated Ala-AMP. The other activity is designated 'posttransfer' editing and involves deacylation of mischarged Ala-tRNA(Pro). The misacylated Cys-tRNA(Pro) is not edited by ProRS. The sequence is that of Proline--tRNA ligase from Cupriavidus taiwanensis (strain DSM 17343 / BCRC 17206 / CCUG 44338 / CIP 107171 / LMG 19424 / R1) (Ralstonia taiwanensis (strain LMG 19424)).